Here is a 188-residue protein sequence, read N- to C-terminus: UPF0301 protein XF_2228 (188 aa).

The protein belongs to the UPF0301 (AlgH) family.

The polypeptide is UPF0301 protein XF_2228 (Xylella fastidiosa (strain 9a5c)).